The following is a 74-amino-acid chain: NAD(P)H-quinone oxidoreductase subunit L (74 aa).

The next 2 membrane-spanning stretches (helical) occupy residues 5–25 and 43–63; these read LIIA…VPAA and AFMY…APLL.

This sequence belongs to the complex I NdhL subunit family. As to quaternary structure, NDH-1 can be composed of about 15 different subunits; different subcomplexes with different compositions have been identified which probably have different functions.

The protein localises to the cellular thylakoid membrane. It carries out the reaction a plastoquinone + NADH + (n+1) H(+)(in) = a plastoquinol + NAD(+) + n H(+)(out). It catalyses the reaction a plastoquinone + NADPH + (n+1) H(+)(in) = a plastoquinol + NADP(+) + n H(+)(out). Its function is as follows. NDH-1 shuttles electrons from an unknown electron donor, via FMN and iron-sulfur (Fe-S) centers, to quinones in the respiratory and/or the photosynthetic chain. The immediate electron acceptor for the enzyme in this species is believed to be plastoquinone. Couples the redox reaction to proton translocation, and thus conserves the redox energy in a proton gradient. Cyanobacterial NDH-1 also plays a role in inorganic carbon-concentration. In Synechococcus elongatus (strain ATCC 33912 / PCC 7942 / FACHB-805) (Anacystis nidulans R2), this protein is NAD(P)H-quinone oxidoreductase subunit L.